A 166-amino-acid chain; its full sequence is Large ribosomal subunit protein uL10 (166 aa).

The protein belongs to the universal ribosomal protein uL10 family. In terms of assembly, part of the ribosomal stalk of the 50S ribosomal subunit. The N-terminus interacts with L11 and the large rRNA to form the base of the stalk. The C-terminus forms an elongated spine to which L12 dimers bind in a sequential fashion forming a multimeric L10(L12)X complex.

Functionally, forms part of the ribosomal stalk, playing a central role in the interaction of the ribosome with GTP-bound translation factors. The protein is Large ribosomal subunit protein uL10 of Stutzerimonas stutzeri (strain A1501) (Pseudomonas stutzeri).